The chain runs to 217 residues: Small ribosomal subunit protein uS3 (217 aa).

The region spanning 38 to 106 (IRKFVQKELA…QVHINIIEIK (69 aa)) is the KH type-2 domain.

The protein belongs to the universal ribosomal protein uS3 family. Part of the 30S ribosomal subunit. Forms a tight complex with proteins S10 and S14.

In terms of biological role, binds the lower part of the 30S subunit head. Binds mRNA in the 70S ribosome, positioning it for translation. The polypeptide is Small ribosomal subunit protein uS3 (Streptococcus pneumoniae serotype 19F (strain G54)).